We begin with the raw amino-acid sequence, 190 residues long: Putative resolvase R80 (190 aa).

Residues 11 to 30 (SSVLGVHQRTLYQWDKKGWI) constitute a DNA-binding region (H-T-H motif). The region spanning 61–190 (LSICYVRVSS…RNGSRKYSNK (130 aa)) is the Resolvase/invertase-type recombinase catalytic domain. Residues 67-92 (RVSSNSQKDDLERQIKFMKKKYPNHT) adopt a coiled-coil conformation. Serine 69 serves as the catalytic O-(5'-phospho-DNA)-serine intermediate.

The protein belongs to the site-specific recombinase resolvase family.

Functionally, resolvase catalyzes the resolution (a site-specific recombination) of the cointegrated replicon to yield the final transposition products. The protein is Putative resolvase R80 of Acanthamoeba polyphaga mimivirus (APMV).